Here is a 438-residue protein sequence, read N- to C-terminus: Phosphatidylcholine-sterol acyltransferase (438 aa).

A signal peptide spans 1-24 (MGLPGSPWQRVLLLLGLLLPPATP). The N-linked (GlcNAc...) asparagine glycan is linked to N44. C74 and C98 are oxidised to a cystine. N108 carries N-linked (GlcNAc...) asparagine glycosylation. The active-site Nucleophile is the S205. An N-linked (GlcNAc...) asparagine glycan is attached at N296. A disulfide bond links C337 and C380. Catalysis depends on D369, which acts as the Charge relay system. N397 is a glycosylation site (N-linked (GlcNAc...) asparagine). H401 (charge relay system) is an active-site residue. N-linked (GlcNAc...) asparagine glycosylation is present at N408.

The protein belongs to the AB hydrolase superfamily. Lipase family. In terms of tissue distribution, detected in blood plasma. Produced and secreted by astrocytes (at protein level). Abundantly expressed in liver, brain and testis with highest levels in liver. In the brain, found in cerebellum, cerebral cortex, hippocampus and brain stem. Located to neurons and neuroglia.

The protein localises to the secreted. The catalysed reaction is a sterol + a 1,2-diacyl-sn-glycero-3-phosphocholine = a sterol ester + a 1-acyl-sn-glycero-3-phosphocholine. It carries out the reaction a 1-O-alkyl-2-acetyl-sn-glycero-3-phosphocholine + H2O = a 1-O-alkyl-sn-glycero-3-phosphocholine + acetate + H(+). The enzyme catalyses a 1-hexadecanoyl-2-acyl-sn-glycero-3-phosphocholine + (24S)-hydroxycholesterol = (24S)-24-hydroxycholesterol ester + 1-hexadecanoyl-sn-glycero-3-phosphocholine. It catalyses the reaction (24S)-hydroxycholesterol + 1-hexadecanoyl-2-(9Z,12Z-octadecadienoyl)-sn-glycero-3-phosphocholine = (24S)-hydroxycholesterol 3-linoleoate + 1-hexadecanoyl-sn-glycero-3-phosphocholine. The catalysed reaction is 1-hexadecanoyl-2-(5Z,8Z,11Z,14Z-eicosatetraenoyl)-sn-glycero-3-phosphocholine + cholesterol = cholesteryl (5Z,8Z,11Z,14Z)-eicosatetraenoate + 1-hexadecanoyl-sn-glycero-3-phosphocholine. It carries out the reaction 1-hexadecanoyl-2-(9Z-octadecenoyl)-sn-glycero-3-phosphocholine + cholesterol = cholesteryl (9Z-octadecenoate) + 1-hexadecanoyl-sn-glycero-3-phosphocholine. The enzyme catalyses 1-hexadecanoyl-2-(8Z,11Z,14Z-eicosatrienoyl)-sn-glycero-3-phosphocholine + cholesterol = cholesteryl (8Z,11Z,14Z)-eicosatrienoate + 1-hexadecanoyl-sn-glycero-3-phosphocholine. It catalyses the reaction 1-hexadecanoyl-2-(5Z,8Z,11Z-eicosatrienoyl)-sn-glycero-3-phosphocholine + cholesterol = cholesteryl (5Z,8Z,11Z)-eicosatrienoate + 1-hexadecanoyl-sn-glycero-3-phosphocholine. The catalysed reaction is 1-hexadecanoyl-2-(5Z,8Z,11Z,14Z,17Z-eicosapentaenoyl)-sn-glycero-3-phosphocholine + cholesterol = (5Z,8Z,11Z,14Z,17Z-eicosapentaenoyl)-cholesterol + 1-hexadecanoyl-sn-glycero-3-phosphocholine. It carries out the reaction 1-hexadecanoyl-2-(9Z,12Z-octadecadienoyl)-sn-glycero-3-phosphocholine + cholesterol = cholesteryl (9Z,12Z)-octadecadienoate + 1-hexadecanoyl-sn-glycero-3-phosphocholine. The enzyme catalyses 1-hexadecanoyl-2-(6Z,9Z,12Z-octadecatrienoyl)-sn-glycero-3-phosphocholine + cholesterol = (6Z,9Z,12Z-octadecatrienoyl)-cholesterol + 1-hexadecanoyl-sn-glycero-3-phosphocholine. It catalyses the reaction 1-hexadecanoyl-2-(11Z,14Z,17Z-eicosatrienoyl)-sn-glycero-3-phosphocholine + cholesterol = (11Z,14Z,17Z-eicosatrienoyl)-cholesterol + 1-hexadecanoyl-sn-glycero-3-phosphocholine. The catalysed reaction is 1-hexadecanoyl-2-(9Z,12Z,15Z-octadecatrienoyl)-sn-glycero-3-phosphocholine + cholesterol = (9Z,12Z,15Z-octadecatrienoyl)-cholesterol + 1-hexadecanoyl-sn-glycero-3-phosphocholine. It carries out the reaction 1-hexadecanoyl-2-(9Z,12Z-octadecadienoyl)-sn-glycero-3-phosphocholine + H2O = (9Z,12Z)-octadecadienoate + 1-hexadecanoyl-sn-glycero-3-phosphocholine + H(+). The enzyme catalyses 1-hexadecanoyl-2-(5Z,8Z,11Z,14Z-eicosatetraenoyl)-sn-glycero-3-phosphocholine + H2O = 1-hexadecanoyl-sn-glycero-3-phosphocholine + (5Z,8Z,11Z,14Z)-eicosatetraenoate + H(+). It catalyses the reaction a 1-O-alkyl-2-acetyl-sn-glycero-3-phosphocholine + 1-hexadecanoyl-sn-glycero-3-phosphocholine = 1-hexadecanoyl-2-acetyl-sn-glycero-3-phosphocholine + a 1-O-alkyl-sn-glycero-3-phosphocholine. With respect to regulation, APOA1 is the most potent activator in plasma. Also activated by APOE, APOC1 and APOA4. In terms of biological role, central enzyme in the extracellular metabolism of plasma lipoproteins. Synthesized mainly in the liver and secreted into plasma where it converts cholesterol and phosphatidylcholines (lecithins) to cholesteryl esters and lysophosphatidylcholines on the surface of high and low density lipoproteins (HDLs and LDLs). The cholesterol ester is then transported back to the liver. Also produced in the brain by primary astrocytes, and esterifies free cholesterol on nascent APOE-containing lipoproteins secreted from glia and influences cerebral spinal fluid (CSF) APOE- and APOA1 levels. Together with APOE and the cholesterol transporter ABCA1, plays a key role in the maturation of glial-derived, nascent lipoproteins. Required for remodeling high-density lipoprotein particles into their spherical forms. Has a preference for plasma 16:0-18:2 or 18:O-18:2 phosphatidylcholines. Catalyzes the hydrolysis of 1-O-alkyl-2-acetyl-sn-glycero-3-phosphocholine (platelet-activating factor or PAF) to 1-O-alkyl-sn-glycero-3-phosphocholine (lyso-PAF). Also catalyzes the transfer of the acetate group from PAF to 1-hexadecanoyl-sn-glycero-3-phosphocholine forming lyso-PAF. Catalyzes the esterification of (24S)-hydroxycholesterol (24(S)OH-C), also known as cerebrosterol to produce 24(S)OH-C monoesters. The polypeptide is Phosphatidylcholine-sterol acyltransferase (Lcat) (Mus musculus (Mouse)).